A 159-amino-acid polypeptide reads, in one-letter code: MISSSKRDELIVSKIRKGTVIDHIPAGRALAVLRILGIRGSEGYRVALVMNVESKKIGRKDIVKIEDRVIDEKEASLITLIAPSATINIIRDYVVTEKRHLEVPKQIRGLIKCPNPQCITNNDVEAESRFTTISIKPLKLKCEYCEIYITEEDVIRQIL.

Zn(2+)-binding residues include Cys-113, Cys-118, Cys-142, and Cys-145.

This sequence belongs to the PyrI family. Contains catalytic and regulatory chains. Zn(2+) serves as cofactor.

Its function is as follows. Involved in allosteric regulation of aspartate carbamoyltransferase. The chain is Aspartate carbamoyltransferase regulatory chain from Saccharolobus islandicus (strain Y.N.15.51 / Yellowstone #2) (Sulfolobus islandicus).